Consider the following 973-residue polypeptide: ATP-dependent DNA helicase homolog RECG1, chloroplastic/mitochondrial (973 aa).

The segment at 1–208 (MAAVTLSPCS…ATSEVEATSD (208 aa)) is sufficient for chloroplastic and mitochondrial trgeting. A disordered region spans residues 174 to 200 (LLQNDDSSDPREDILDDGSSFTSKTAT). The 190-residue stretch at 536 to 725 (DLKRPVPMNR…LYGDISLTQI (190 aa)) folds into the Helicase ATP-binding domain. 549–556 (GDVGCGKT) contacts ATP. The DEQQ box signature appears at 655–658 (DEQQ). Positions 746 to 904 (GIKEVYSMML…GFYLANIDLL (159 aa)) constitute a Helicase C-terminal domain.

It belongs to the helicase family. RecG subfamily. In terms of tissue distribution, expressed in most tissues, not seen in pollen, ovules or developing seeds.

Its subcellular location is the plastid. The protein localises to the chloroplast. It localises to the mitochondrion. The enzyme catalyses Couples ATP hydrolysis with the unwinding of duplex DNA by translocating in the 3'-5' direction.. It catalyses the reaction ATP + H2O = ADP + phosphate + H(+). Plays a critical role in recombination and DNA repair. Helps process Holliday junction (HJ) intermediates to mature products by catalyzing branch migration. Has replication fork regression activity, unwinds stalled or blocked replication forks to make a HJ that can be resolved. Has a DNA unwinding activity characteristic of a DNA helicase with 3'-5' polarity. Its function is as follows. Plays a role in recombination surveillance and repair of double-stranded (ds)DNA breaks in the mitochondrion. May be able to dissociate D- and R-loops. Able to complement UV sensitivity of a recG deletion in E.coli. This chain is ATP-dependent DNA helicase homolog RECG1, chloroplastic/mitochondrial, found in Arabidopsis thaliana (Mouse-ear cress).